The sequence spans 150 residues: MNIEVEMKVLDERMADFIPAYATEGSAGLDLRACLDEEVVLQPGETFLVPTGLAIYLANPAYAAVLLPRSGLGHKHGIVLGNLVGLIDSDYQGELKVSLWNRGSEPFAVKPFERIAQMVIVPVVQAGFKRVEEFVGSSRGEGGFGSTGSH.

Substrate contacts are provided by residues 69 to 71, Asn-82, 86 to 88, and Lys-96; these read RSG and LID.

It belongs to the dUTPase family. Requires Mg(2+) as cofactor.

The enzyme catalyses dUTP + H2O = dUMP + diphosphate + H(+). Its pathway is pyrimidine metabolism; dUMP biosynthesis; dUMP from dCTP (dUTP route): step 2/2. Its function is as follows. This enzyme is involved in nucleotide metabolism: it produces dUMP, the immediate precursor of thymidine nucleotides and it decreases the intracellular concentration of dUTP so that uracil cannot be incorporated into DNA. This chain is Deoxyuridine 5'-triphosphate nucleotidohydrolase, found in Neisseria gonorrhoeae (strain ATCC 700825 / FA 1090).